A 131-amino-acid chain; its full sequence is Large ribosomal subunit protein bL17 (131 aa).

This sequence belongs to the bacterial ribosomal protein bL17 family. In terms of assembly, part of the 50S ribosomal subunit. Contacts protein L32.

The polypeptide is Large ribosomal subunit protein bL17 (Chromobacterium violaceum (strain ATCC 12472 / DSM 30191 / JCM 1249 / CCUG 213 / NBRC 12614 / NCIMB 9131 / NCTC 9757 / MK)).